We begin with the raw amino-acid sequence, 609 residues long: Probable G-protein coupled receptor 153 (609 aa).

The Extracellular portion of the chain corresponds to 1–11 (MSDERRLPGSA). The chain crosses the membrane as a helical span at residues 12–32 (VGWLVCGGLSLLANAWGILSV). Over 33-41 (GAKQKKWKP) the chain is Cytoplasmic. A helical membrane pass occupies residues 42–62 (LEFLLCTLAATHMLNVAVPIA). Residues 63 to 84 (TYSVVQLRRQRPDFEWNEGLCK) are Extracellular-facing. Residues 85 to 105 (VFVSTFYTLTLATCFSVTSLS) traverse the membrane as a helical segment. Topologically, residues 106 to 126 (YHRMWMVCWPVNYRLSNAKKQ) are cytoplasmic. The chain crosses the membrane as a helical span at residues 127–147 (AVHTVMGIWMVSFILSALPAV). Over 148–175 (GWHDTSERFYTHGCRFIVAEIGLGFGVC) the chain is Extracellular. Residues 176-196 (FLLLVGGSVAMGVICTAIALF) traverse the membrane as a helical segment. The Cytoplasmic segment spans residues 197–243 (QTLAVQVGRQADRRAFTVPTIVVEDAQGKRRSSIDGSEPAKTSLQTT). The chain crosses the membrane as a helical span at residues 244–264 (GLVTTIVFIYDCLMGFPVLVV). Residues 265-276 (SFSSLRADASAP) lie on the Extracellular side of the membrane. A helical membrane pass occupies residues 277–297 (WMALCVLWCSVAQALLLPVFL). Residues 298–609 (WACDRYRADL…LHSDSLGSAS (312 aa)) lie on the Cytoplasmic side of the membrane. Disordered stretches follow at residues 446–496 (DAPP…SASA) and 514–609 (ALRR…GSAS). Composition is skewed to low complexity over residues 458-479 (ESLLSLRPSALDSGPRGARDSP) and 527-536 (AAPDGADPGE). The segment covering 571–583 (EPGGLRAAGGGGS) has biased composition (gly residues). The segment covering 584–596 (TSSFLSSPSESSG) has biased composition (low complexity).

This sequence belongs to the G-protein coupled receptor 1 family.

It is found in the cell membrane. Functionally, orphan receptor. The protein is Probable G-protein coupled receptor 153 (GPR153) of Homo sapiens (Human).